Consider the following 129-residue polypeptide: MANPKPQAKKKIKKNIPKGIAHIHSTFNNTIVTVSDEKGNVLSWSSAGAIGFKGSKKSTPYAAQLISEAAAKGAMDNGVKTVSVEVKGPGPGRDAAIRALQMAGLEITSIKDTTPIPHNGVRPRKRPRG.

It belongs to the universal ribosomal protein uS11 family. As to quaternary structure, part of the 30S ribosomal subunit. Interacts with proteins S7 and S18. Binds to IF-3.

In terms of biological role, located on the platform of the 30S subunit, it bridges several disparate RNA helices of the 16S rRNA. Forms part of the Shine-Dalgarno cleft in the 70S ribosome. The chain is Small ribosomal subunit protein uS11 from Mycoplasma mycoides subsp. mycoides SC (strain CCUG 32753 / NCTC 10114 / PG1).